The sequence spans 724 residues: Outer spore wall protein 2 (724 aa).

Disordered stretches follow at residues asparagine 407–valine 427 and threonine 477–lysine 497.

The protein resides in the cytoplasm. Its subcellular location is the prospore membrane. May be involved in a late step of spore wall assembly. The chain is Outer spore wall protein 2 (OSW2) from Saccharomyces cerevisiae (strain ATCC 204508 / S288c) (Baker's yeast).